A 362-amino-acid chain; its full sequence is NAD(P)H-quinone oxidoreductase subunit 1, chloroplastic (362 aa).

The next 8 helical transmembrane spans lie at 27–47 (IWILPILALLLGITIEVLVIV), 103–123 (IAVISILLSFLVIPLGYHFVL), 128–148 (IGVFLWIAISSIAPIGLLMAG), 164–184 (AAQSISYEIPLTFCVLAISLL), 202–222 (FFGWNLWRQPIGFLVFLISSL), 247–267 (YSGIKYGLFYLVSYLNLLVSS), 303–323 (VIGIFITLTKAYLFLFISITI), and 342–362 (FLLPISLGNLLLTTSFQLVSL).

This sequence belongs to the complex I subunit 1 family. NDH is composed of at least 16 different subunits, 5 of which are encoded in the nucleus.

It localises to the plastid. It is found in the chloroplast thylakoid membrane. The enzyme catalyses a plastoquinone + NADH + (n+1) H(+)(in) = a plastoquinol + NAD(+) + n H(+)(out). The catalysed reaction is a plastoquinone + NADPH + (n+1) H(+)(in) = a plastoquinol + NADP(+) + n H(+)(out). Functionally, NDH shuttles electrons from NAD(P)H:plastoquinone, via FMN and iron-sulfur (Fe-S) centers, to quinones in the photosynthetic chain and possibly in a chloroplast respiratory chain. The immediate electron acceptor for the enzyme in this species is believed to be plastoquinone. Couples the redox reaction to proton translocation, and thus conserves the redox energy in a proton gradient. This is NAD(P)H-quinone oxidoreductase subunit 1, chloroplastic from Saccharum hybrid (Sugarcane).